Here is a 65-residue protein sequence, read N- to C-terminus: U15-hexatoxin-Mg1b (65 aa).

Post-translationally, contains 4 disulfide bonds. Expressed by the venom gland.

The protein localises to the secreted. Its function is as follows. In vivo, intrathorax injection into crickets causes death. The polypeptide is U15-hexatoxin-Mg1b (Macrothele gigas (Japanese funnel web spider)).